The chain runs to 913 residues: Pentatricopeptide repeat-containing protein At1g10270 (913 aa).

The interval 34-138 (SLSPANEDPE…PNAPRLPDST (105 aa)) is disordered. Polar residues predominate over residues 64–73 (DPSQFQIPQN). Residues 74 to 84 (HTPPIPYPPIP) show a composition bias toward pro residues. Positions 99 to 108 (ERRRRKRRLR) match the Nuclear localization signal motif. Residues 108-130 (RIEPPLHALRRDPSAPPPKRDPN) show a composition bias toward basic and acidic residues. A leucine-zipper region spans residues 134 to 167 (LPDSTSALVGQRLNLHNRVQSLIRASDLDAASKL). PPR repeat units follow at residues 179-214 (TVFTCNAIIAAMYRAKRYSESISLFQYFFKQSNIVP), 215-250 (NVVSYNQIINAHCDEGNVDEALEVYRHILANAPFAP), 251-285 (SSVTYRHLTKGLVQAGRIGDAASLLREMLSKGQAA), 286-316 (DSTVYNNLIRGYLDLGDFDKAVEFFDELKSK), 321-355 (DGIVNATFMEYWFEKGNDKEAMESYRSLLDKKFRM), 356-390 (HPPTGNVLLEVFLKFGKKDEAWALFNEMLDNHAPP), 396-426 (NSDTVGIMVNECFKMGEFSEAINTFKKVGSK), 435-469 (DYLGYCNIVTRFCEQGMLTEAERFFAEGVSRSLPA), 470-504 (DAPSHRAMIDAYLKAERIDDAVKMLDRMVDVNLRV), 505-539 (VADFGARVFGELIKNGKLTESAEVLTKMGEREPKP), and 540-574 (DPSIYDVVVRGLCDGDALDQAKDIVGEMIRHNVGV). A disordered region spans residues 607 to 913 (RNAGQSGNTP…QEKKVVELRN (307 aa)). Residues 639–649 (WTSQGVVHSNS) show a composition bias toward polar residues. Low complexity-rich tracts occupy residues 650–666 (GWANGTAGQTAGGAYKA) and 673–690 (SWSNTSDNQQQQSWSNQT). The segment at 674 to 858 (WSNTSDNQQQ…TAQQQWSNQT (185 aa)) is 14 X 11 AA approximate tandem repeats of W-x(2)-Q-x(4)-Q-x(2). A compositionally biased stretch (polar residues) spans 691–700 (AGQQPPSWSR). Low complexity predominate over residues 706 to 727 (QQQQSWSQQSGWSSPSGHQQSW). Residues 728-761 (TNQTAGQQQPWANQTPGQQQQWANQTPGQQQQLA) are compositionally biased toward polar residues. Residues 762–791 (NQTPGQQQQWANQTPGQQQQWANQNNGHQQ) show a composition bias toward low complexity. Polar residues predominate over residues 792–814 (PWANQNTGHQQSWANQTPSQQQP). Residues 815 to 845 (WANQTTGQQQGWGNQTTGQQQQWANQTAGQQ) are compositionally biased toward low complexity. Polar residues-rich tracts occupy residues 846–867 (SGWTAQQQWSNQTASHQQSQWL) and 875–894 (ANQTPWSNSVDSHLPQQQEP). Positions 899–913 (ECQETQEKKVVELRN) are enriched in basic and acidic residues.

This sequence belongs to the PPR family. P subfamily. In terms of assembly, interacts with RPB36B through its WQQ domain. In terms of tissue distribution, ubiquitous but preferentially expressed in gametophytes and young embryos.

It localises to the nucleus. Its function is as follows. May function as a transcriptional regulator essential for early embryogenesis. In Arabidopsis thaliana (Mouse-ear cress), this protein is Pentatricopeptide repeat-containing protein At1g10270 (GRP23).